Reading from the N-terminus, the 338-residue chain is Ferrochelatase (338 aa).

2 residues coordinate Fe cation: histidine 189 and glutamate 293.

This sequence belongs to the ferrochelatase family.

It localises to the cytoplasm. The catalysed reaction is heme b + 2 H(+) = protoporphyrin IX + Fe(2+). The protein operates within porphyrin-containing compound metabolism; protoheme biosynthesis; protoheme from protoporphyrin-IX: step 1/1. Functionally, catalyzes the ferrous insertion into protoporphyrin IX. This Azotobacter vinelandii (strain DJ / ATCC BAA-1303) protein is Ferrochelatase.